Consider the following 447-residue polypeptide: Trigger factor (447 aa).

The region spanning 174 to 261 (GDIAVLGFKG…LKDLKTRELP (88 aa)) is the PPIase FKBP-type domain.

The protein belongs to the FKBP-type PPIase family. Tig subfamily.

The protein resides in the cytoplasm. It carries out the reaction [protein]-peptidylproline (omega=180) = [protein]-peptidylproline (omega=0). Functionally, involved in protein export. Acts as a chaperone by maintaining the newly synthesized protein in an open conformation. Functions as a peptidyl-prolyl cis-trans isomerase. The chain is Trigger factor from Synechococcus sp. (strain CC9902).